The sequence spans 413 residues: Putative F-box/kelch-repeat protein At3g22870 (413 aa).

Positions 2–53 (TLTISDLPRDLKKKIFSRIPLRYVRALRLTCKEWETLIKSRSLKIDEEESQM) constitute an F-box domain. 2 Kelch repeats span residues 156–202 (LLRF…IGVS) and 331–379 (KVFI…RRRQ).

In Arabidopsis thaliana (Mouse-ear cress), this protein is Putative F-box/kelch-repeat protein At3g22870.